Here is a 2009-residue protein sequence, read N- to C-terminus: Protein Daple (2009 aa).

One can recognise a Calponin-homology (CH) domain in the interval 11–131 (LFLQSPLVTW…KVLLLVLGCA (121 aa)). A disordered region spans residues 221 to 251 (QTQQPPSPGKFSSPDSTPSPTSSLSSEDKQH). Ser-227 and Ser-239 each carry phosphoserine. Residues 232–245 (SSPDSTPSPTSSLS) are compositionally biased toward low complexity. 2 coiled-coil regions span residues 247–425 (EDKQ…QKQS) and 456–1008 (ELNE…TQEG). The residue at position 486 (Ser-486) is a Phosphoserine. The disordered stretch occupies residues 1002-1036 (LRQTQEGGDKAQNALKRPPGKVTSHQEKEAWEPSH). Residues 1025–1036 (SHQEKEAWEPSH) are compositionally biased toward basic and acidic residues. Positions 1190–1384 (HRNLELEHKE…LEEKIMDQYK (195 aa)) form a coiled coil. Basic and acidic residues predominate over residues 1410-1419 (KEGSRERLKS). Disordered regions lie at residues 1410 to 1716 (KEGS…GAKM) and 1757 to 1787 (GMPS…HMPV). Low complexity predominate over residues 1430-1439 (PSDPASPSPS). Phosphoserine is present on Ser-1435. Over residues 1440 to 1449 (QALRSQTENP) the composition is skewed to polar residues. 2 stretches are compositionally biased toward low complexity: residues 1510–1524 (TFST…SSST) and 1562–1581 (NSLE…SLKG). Ser-1592 carries the post-translational modification Phosphoserine. The GBA motif lies at 1652–1683 (HSASPSSEMVTLEEFLEESNRGGSPTHDTPSC). Residues 1681–1697 (PSCRDDLLSDYFRKAHD) are compositionally biased toward basic and acidic residues. The span at 1761–1783 (RQVQPPQSLSLGRPRQTTMTQNC) shows a compositional bias: polar residues. The residue at position 1798 (Ser-1798) is a Phosphoserine. The tract at residues 1808-2009 (SGPEACRPES…QTVWYEYGCV (202 aa)) is disordered. A compositionally biased stretch (basic and acidic residues) spans 1866-1883 (RPLDTRRFSLAPPKEERL). Polar residues predominate over residues 1898-1911 (GCSSGSNPQIQHFS). The segment covering 1943–1954 (TSEGDGGPGHGY) has biased composition (gly residues). A compositionally biased stretch (polar residues) spans 1981–1991 (SQGSSSKSTPA). The short motif at 2006 to 2009 (YGCV) is the PDZ-binding element. The DVL1-binding stretch occupies residues 2007–2009 (GCV).

Belongs to the CCDC88 family. In terms of assembly, homooligomer. Interacts with DVL1 (via PDZ domain); dissociates following initiation of non-canonical Wnt signaling. Interacts (via C-terminus) with ligand-activated Wnt receptor FZD7; competes with DVL1 for binding to FZD7 and displaces DVL1 from ligand-activated FZD7. Interacts (via GBA motif) with guanine nucleotide-binding protein G(i) alpha subunits GNAI1, GNAI2 and GNAI3 (inactive GDP-bound form); interacts with higher affinity with GNAI1 and GNAI3 than with GNAI2 and interaction leads to G(i) alpha subunit activation. Does not interact with GNAO1.

Its subcellular location is the cytoplasm. The protein localises to the cell junction. In terms of biological role, required for activation of guanine nucleotide-binding proteins (G-proteins) during non-canonical Wnt signaling. Binds to ligand-activated Wnt receptor FZD7, displacing DVL1 from the FZD7 receptor and leading to inhibition of canonical Wnt signaling. Acts as a non-receptor guanine nucleotide exchange factor by also binding to guanine nucleotide-binding protein G(i) alpha (Gi-alpha) subunits, leading to their activation. Binding to Gi-alpha subunits displaces the beta and gamma subunits from the heterotrimeric G-protein complex, triggering non-canonical Wnt responses such as activation of RAC1 and PI3K-AKT signaling. Promotes apical constriction of cells via ARHGEF18. This chain is Protein Daple (Ccdc88c), found in Mus musculus (Mouse).